A 753-amino-acid polypeptide reads, in one-letter code: 5-methyltetrahydropteroyltriglutamate--homocysteine methyltransferase (753 aa).

5-methyltetrahydropteroyltri-L-glutamate-binding positions include 17-20 (RELK) and K117. L-homocysteine contacts are provided by residues 431-433 (IGS) and E484. L-methionine contacts are provided by residues 431 to 433 (IGS) and E484. 5-methyltetrahydropteroyltri-L-glutamate-binding positions include 515-516 (RC) and W561. D599 contributes to the L-homocysteine binding site. D599 is a binding site for L-methionine. Residue E605 participates in 5-methyltetrahydropteroyltri-L-glutamate binding. Residues H641, C643, and E665 each coordinate Zn(2+). H694 acts as the Proton donor in catalysis. C726 provides a ligand contact to Zn(2+).

The protein belongs to the vitamin-B12 independent methionine synthase family. Zn(2+) serves as cofactor.

The enzyme catalyses 5-methyltetrahydropteroyltri-L-glutamate + L-homocysteine = tetrahydropteroyltri-L-glutamate + L-methionine. Its pathway is amino-acid biosynthesis; L-methionine biosynthesis via de novo pathway; L-methionine from L-homocysteine (MetE route): step 1/1. In terms of biological role, catalyzes the transfer of a methyl group from 5-methyltetrahydrofolate to homocysteine resulting in methionine formation. In Cronobacter sakazakii (strain ATCC BAA-894) (Enterobacter sakazakii), this protein is 5-methyltetrahydropteroyltriglutamate--homocysteine methyltransferase.